The sequence spans 316 residues: Non-structural protein NS-S (316 aa).

Belongs to the phlebovirus NS-S protein family. As to quaternary structure, interacts with host RIGI; this interaction targets RIGI to proteasomal degradation. Interacts with host EIF2AK2/PKR; this interaction leads to the proteasomal degradation of host EIF2AK2/PKR.

Functionally, promotes the proteasomal degradation of host EIF2AK2/PKR but is unable to suppress host general transcription. Prevents the establishment of the host antiviral state by interfering with beta interferon (IFN-beta) production. Interacts with host RIGI and targets it for proteasomal degradation, thereby inhibiting RIGI-mediated signaling pathway. This chain is Non-structural protein NS-S (NSS), found in Toscana virus (Tos).